The following is a 180-amino-acid chain: Ribulose bisphosphate carboxylase small subunit, chloroplastic 1 (180 aa).

A chloroplast-targeting transit peptide spans 1–56 (MASSVISSAAVATRTNVAQASMVAPFNGLKSAVSFPVSSKQNLDITSIASNGGRVQ).

Belongs to the RuBisCO small chain family. In terms of assembly, heterohexadecamer of 8 large and 8 small subunits.

The protein localises to the plastid. The protein resides in the chloroplast. RuBisCO catalyzes two reactions: the carboxylation of D-ribulose 1,5-bisphosphate, the primary event in carbon dioxide fixation, as well as the oxidative fragmentation of the pentose substrate. Both reactions occur simultaneously and in competition at the same active site. Although the small subunit is not catalytic it is essential for maximal activity. The sequence is that of Ribulose bisphosphate carboxylase small subunit, chloroplastic 1 from Petunia hybrida (Petunia).